The sequence spans 401 residues: Nicotinate phosphoribosyltransferase (401 aa).

A Phosphohistidine; by autocatalysis modification is found at His221.

It belongs to the NAPRTase family. Post-translationally, transiently phosphorylated on a His residue during the reaction cycle. Phosphorylation strongly increases the affinity for substrates and increases the rate of nicotinate D-ribonucleotide production. Dephosphorylation regenerates the low-affinity form of the enzyme, leading to product release.

It catalyses the reaction nicotinate + 5-phospho-alpha-D-ribose 1-diphosphate + ATP + H2O = nicotinate beta-D-ribonucleotide + ADP + phosphate + diphosphate. It functions in the pathway cofactor biosynthesis; NAD(+) biosynthesis; nicotinate D-ribonucleotide from nicotinate: step 1/1. Functionally, catalyzes the synthesis of beta-nicotinate D-ribonucleotide from nicotinate and 5-phospho-D-ribose 1-phosphate at the expense of ATP. The chain is Nicotinate phosphoribosyltransferase from Pectobacterium carotovorum subsp. carotovorum (strain PC1).